Consider the following 609-residue polypeptide: Heat shock factor protein (609 aa).

The segment covering 1–33 (MIQTASTISSNGGTNQGMESSSANSPEMNGTQN) has biased composition (polar residues). Residues 1-47 (MIQTASTISSNGGTNQGMESSSANSPEMNGTQNSMSVGMSGSGSSQN) form a disordered region. Low complexity predominate over residues 34 to 45 (SMSVGMSGSGSS). A DNA-binding region spans residues 50–156 (ITQFSNKLYN…LLCLVTRKKA (107 aa)). Disordered stretches follow at residues 255–298 (PTVS…GKYR), 310–371 (SSFN…TDPK), 411–445 (NNTSSEQHHNSYRGSVSNSQPSGNLSESTNLQPVQ), and 567–609 (SNGN…SIGA). Polar residues-rich tracts occupy residues 257–277 (VSPTNEPSAHSRPSPQGTTAN), 339–360 (DSFNNSIDSYISPNQSPNTDVP), 422–443 (YRGSVSNSQPSGNLSESTNLQP), and 567–597 (SNGNTFGSNPVSLPNQQKSVNPSLMTVSSPR). A Phosphoserine modification is found at Ser350. Residues 598–609 (QVRKKRKSSIGA) are compositionally biased toward basic residues.

The protein belongs to the HSF family. In terms of assembly, homotrimer.

The protein resides in the nucleus. DNA-binding protein that specifically binds heat shock promoter elements (HSE) and activates transcription. Also required for growth at normal temperatures. The chain is Heat shock factor protein (hsf1) from Schizosaccharomyces pombe (strain 972 / ATCC 24843) (Fission yeast).